The following is a 608-amino-acid chain: Probable Ufm1-specific protease 2 (608 aa).

Active-site residues include Cys441, Asp565, and His567.

Belongs to the peptidase C78 family.

Thiol protease which recognizes and hydrolyzes the peptide bond at the C-terminal Gly of UFM1, a ubiquitin-like modifier protein bound to a number of target proteins. Does not hydrolyze SUMO1 or ISG15 ubiquitin-like proteins. The polypeptide is Probable Ufm1-specific protease 2 (Drosophila pseudoobscura pseudoobscura (Fruit fly)).